Reading from the N-terminus, the 998-residue chain is Regulator of telomere elongation helicase 1 homolog (998 aa).

The region spanning 7–324 is the Helicase ATP-binding domain; that stretch reads AGIPVHFPFE…KEMLLELEKA (318 aa). An ATP-binding site is contributed by 42-49; that stretch reads SPTGTGKT. Positions 148, 166, 175, and 211 each coordinate [4Fe-4S] cluster. A DEAH box motif is present at residues 254–257; the sequence is DEAH. The tract at residues 426–454 is disordered; the sequence is QNAGKPAPKQQQQGGWLGKGNNTSNSSSS. Threonine 887 is modified (phosphothreonine).

This sequence belongs to the helicase family. RAD3/XPD subfamily.

The protein localises to the nucleus. It catalyses the reaction ATP + H2O = ADP + phosphate + H(+). A probable ATP-dependent DNA helicase implicated in DNA repair and the maintenance of genomic stability. Acts as an anti-recombinase to counteract toxic recombination and limit crossover during meiosis. Regulates meiotic recombination and crossover homeostasis by physically dissociating strand invasion events and thereby promotes noncrossover repair by meiotic synthesis dependent strand annealing (SDSA) as well as disassembly of D loop recombination intermediates. In Drosophila willistoni (Fruit fly), this protein is Regulator of telomere elongation helicase 1 homolog.